The following is a 1075-amino-acid chain: DNA-directed RNA polymerase subunit beta (1075 aa).

The protein belongs to the RNA polymerase beta chain family. In plastids the minimal PEP RNA polymerase catalytic core is composed of four subunits: alpha, beta, beta', and beta''. When a (nuclear-encoded) sigma factor is associated with the core the holoenzyme is formed, which can initiate transcription.

It localises to the plastid. The protein resides in the chloroplast. The enzyme catalyses RNA(n) + a ribonucleoside 5'-triphosphate = RNA(n+1) + diphosphate. In terms of biological role, DNA-dependent RNA polymerase catalyzes the transcription of DNA into RNA using the four ribonucleoside triphosphates as substrates. The polypeptide is DNA-directed RNA polymerase subunit beta (Pinus thunbergii (Japanese black pine)).